We begin with the raw amino-acid sequence, 88 residues long: Small ribosomal subunit protein uS17 (88 aa).

Belongs to the universal ribosomal protein uS17 family. As to quaternary structure, part of the 30S ribosomal subunit.

Functionally, one of the primary rRNA binding proteins, it binds specifically to the 5'-end of 16S ribosomal RNA. This is Small ribosomal subunit protein uS17 from Prochlorococcus marinus (strain SARG / CCMP1375 / SS120).